The following is a 211-amino-acid chain: PDR1 up-regulated protein 1 (211 aa).

The next 2 membrane-spanning stretches (helical) occupy residues 45-67 (ISKASVVGAATGLSAGLGGPYAY) and 82-99 (RTILLGVVSMVIMRNVAA).

The protein belongs to the PUP1 family.

It is found in the mitochondrion membrane. In terms of biological role, mitochondrial protein that contributes to the enhanced virulence of C.glabrata strains that acquired azole resistance. The sequence is that of PDR1 up-regulated protein 1 from Candida glabrata (strain ATCC 2001 / BCRC 20586 / JCM 3761 / NBRC 0622 / NRRL Y-65 / CBS 138) (Yeast).